The following is a 608-amino-acid chain: Kelch-like protein 10 (608 aa).

Residues 39–106 (CDVVIKVNGF…AYTRTVPITP (68 aa)) enclose the BTB domain. 6 Kelch repeats span residues 292 to 339 (ILFA…YLKG), 340 to 386 (YVYI…VLSN), 388 to 433 (IYAM…TLYG), 434 to 480 (KVYI…AYGE), 481 to 527 (HVYA…VVDD), and 529 to 574 (LFVV…VVPG). At Ser501 the chain carries Phosphoserine.

Self-associates. Interacts with CUL3; indicative for the participation in an E3 ubiquitin ligase complex.

It localises to the cytoplasm. It functions in the pathway protein modification; protein ubiquitination. In terms of biological role, may be a substrate-specific adapter of a CUL3-based E3 ubiquitin-protein ligase complex which mediates the ubiquitination and subsequent proteasomal degradation of target proteins during spermatogenesis. In Rattus norvegicus (Rat), this protein is Kelch-like protein 10 (Klhl10).